The sequence spans 933 residues: Protein translocase subunit SecA (933 aa).

Residues Q90, 108-112, and D504 contribute to the ATP site; that span reads GEGKT. The tract at residues 539 to 570 is disordered; that stretch reads GMGSNNRRPQGFGQDSKKKKWQPSADIFPTDL.

The protein belongs to the SecA family. Monomer and homodimer. Part of the essential Sec protein translocation apparatus which comprises SecA, SecYEG and auxiliary proteins SecDF. Other proteins may also be involved.

Its subcellular location is the cell inner membrane. It localises to the cellular thylakoid membrane. The protein localises to the cytoplasm. It carries out the reaction ATP + H2O + cellular proteinSide 1 = ADP + phosphate + cellular proteinSide 2.. Functionally, part of the Sec protein translocase complex. Interacts with the SecYEG preprotein conducting channel. Has a central role in coupling the hydrolysis of ATP to the transfer of proteins into and across the cell membrane, serving as an ATP-driven molecular motor driving the stepwise translocation of polypeptide chains across the membrane. Its function is as follows. Probably participates in protein translocation into and across both the cytoplasmic and thylakoid membranes in cyanobacterial cells. The protein is Protein translocase subunit SecA of Crocosphaera subtropica (strain ATCC 51142 / BH68) (Cyanothece sp. (strain ATCC 51142)).